A 148-amino-acid polypeptide reads, in one-letter code: Small ribosomal subunit protein bS6 (148 aa).

The segment at 96–148 (HEEGQSAMLTRRDDRRERDGDDRPRRREGGFDRGDRGDRGPRRPRDNEAGEGA) is disordered.

The protein belongs to the bacterial ribosomal protein bS6 family.

Binds together with bS18 to 16S ribosomal RNA. The chain is Small ribosomal subunit protein bS6 from Brucella melitensis biotype 1 (strain ATCC 23456 / CCUG 17765 / NCTC 10094 / 16M).